Consider the following 212-residue polypeptide: MFKRKTAWFSDSVEKEVISFWVSEGGDISSWKTAGYLFSDDASSEDTKRIYGSEDYVKNRATVFHSSFLLACQPRQSVTSVPIGHYVLPPDFVQNEMKAIIGRFIWEKDEQVICEEQINPEVPKDILSGETEDHALRERSSQDDYQTVTSQSKVCSCCEMRQYPVNNMISGYVHIDQMRKYSGELKDFLPSLHGHDVSRSNDPTPPFHRKAV.

Belongs to the TERB2 family. As to quaternary structure, component of the MAJIN-TERB1-TERB2 complex.

In terms of biological role, meiosis-specific telomere-associated protein involved in meiotic telomere attachment to the nucleus inner membrane, a crucial step for homologous pairing and synapsis. Component of the MAJIN-TERB1-TERB2 complex, which promotes telomere cap exchange by mediating attachment of telomeric DNA to the inner nuclear membrane and replacement of the protective cap of telomeric chromosomes: in early meiosis, the MAJIN-TERB1-TERB2 complex associates with telomeric DNA and the shelterin/telosome complex. During prophase, the complex matures and promotes release of the shelterin/telosome complex from telomeric DNA. The chain is Telomere repeats-binding bouquet formation protein 2 from Danio rerio (Zebrafish).